A 625-amino-acid polypeptide reads, in one-letter code: MSNKQNTAVQEFEYKAEMKQLLDLIVHSLYTHPEIFLRELVSNASDALSKARFSALTDDTMAKVSGEAAIRISLDAKTAAFAIEDTGIGMTEEELIANLGTVARSGTLGFMQALRQEKKELDGNLIGQFGVGFYSVFMVTDDVTVETRSARAGSEGLRWRSSGQGTYTIEKIDKKEPGTRISFTLKDEHKEFAEEYRVEHIIKKYSNFVDFPIYLETKQLNSITALWQRPKSELKQEEVNEFYKFISNDFNEPLDYLHVSVEGAVSFKAILFLPKEAPMELLYRQGELENKGPQLYVKKVMIQHECRDLLPEYLRFIAGVVDTEDLSLNVSREIVQSSPVMSKIRQILTGKILGWFEELATAQPEKFRTFYKAFGPIVKIGLNTDFTNRDKLIELLRFESTKTGEGEYVTLKEYAARMAPDQKEIYYHSGAGRAQLLANPNLEYFQDKGIEVLLLSDPVDVFVIPSIHEYDKKQLKSIEKADIDFSKATKDKTEPIAENLLVPLLKIFRETLGEGIEDVVESHRLVSSPVTLVSGKDAMDSQMERMMKMMQQEMPAGRKILEVNPSHPIIRNLSGMMMANDNNPLIRTAIHQLYEGALLLEGGLDSTTGFVSRMNELIEAATLSR.

The tract at residues 1–332 (MSNKQNTAVQ…TEDLSLNVSR (332 aa)) is a; substrate-binding. Positions 333-545 (EIVQSSPVMS…KDAMDSQMER (213 aa)) are b. The interval 546–625 (MMKMMQQEMP…ELIEAATLSR (80 aa)) is c.

Belongs to the heat shock protein 90 family. In terms of assembly, homodimer.

The protein localises to the cytoplasm. Molecular chaperone. Has ATPase activity. The sequence is that of Chaperone protein HtpG from Chlorobium luteolum (strain DSM 273 / BCRC 81028 / 2530) (Pelodictyon luteolum).